The following is a 109-amino-acid chain: Large ribosomal subunit protein uL22 (109 aa).

This sequence belongs to the universal ribosomal protein uL22 family. Part of the 50S ribosomal subunit.

Functionally, this protein binds specifically to 23S rRNA; its binding is stimulated by other ribosomal proteins, e.g. L4, L17, and L20. It is important during the early stages of 50S assembly. It makes multiple contacts with different domains of the 23S rRNA in the assembled 50S subunit and ribosome. In terms of biological role, the globular domain of the protein is located near the polypeptide exit tunnel on the outside of the subunit, while an extended beta-hairpin is found that lines the wall of the exit tunnel in the center of the 70S ribosome. The protein is Large ribosomal subunit protein uL22 of Paraburkholderia xenovorans (strain LB400).